An 89-amino-acid polypeptide reads, in one-letter code: Putative regulatory protein Dalk_1931 (89 aa).

This sequence belongs to the RemA family.

The protein is Putative regulatory protein Dalk_1931 of Desulfatibacillum aliphaticivorans.